We begin with the raw amino-acid sequence, 397 residues long: Acetyl-CoA acetyltransferase, cytosolic (397 aa).

An N-acetylmethionine modification is found at M1. C92 functions as the Acyl-thioester intermediate in the catalytic mechanism. K200 bears the N6-acetyllysine mark. The CoA site is built by R223 and S226. N6-acetyllysine occurs at positions 233 and 235. Position 252 (S252) interacts with CoA. C383 (proton donor/acceptor) is an active-site residue.

This sequence belongs to the thiolase-like superfamily. Thiolase family. As to quaternary structure, homotetramer.

It localises to the cytoplasm. Its subcellular location is the cytosol. The enzyme catalyses 2 acetyl-CoA = acetoacetyl-CoA + CoA. The protein operates within lipid metabolism; fatty acid metabolism. In terms of biological role, involved in the biosynthetic pathway of cholesterol. The protein is Acetyl-CoA acetyltransferase, cytosolic (Acat2) of Rattus norvegicus (Rat).